A 172-amino-acid polypeptide reads, in one-letter code: Adenine phosphoribosyltransferase (172 aa).

It belongs to the purine/pyrimidine phosphoribosyltransferase family. As to quaternary structure, homodimer.

Its subcellular location is the cytoplasm. The enzyme catalyses AMP + diphosphate = 5-phospho-alpha-D-ribose 1-diphosphate + adenine. The protein operates within purine metabolism; AMP biosynthesis via salvage pathway; AMP from adenine: step 1/1. Functionally, catalyzes a salvage reaction resulting in the formation of AMP, that is energically less costly than de novo synthesis. This is Adenine phosphoribosyltransferase from Streptococcus agalactiae serotype Ia (strain ATCC 27591 / A909 / CDC SS700).